The sequence spans 564 residues: Ubiquitin carboxyl-terminal hydrolase 39 (564 aa).

Residues 1 to 96 are disordered; the sequence is MSSRSKRQSH…VRAKNGRVDS (96 aa). Over residues 28–39 the composition is skewed to basic and acidic residues; that stretch reads IKKERDREKEPE. At Ser-46 the chain carries Phosphoserine. A Glycyl lysine isopeptide (Lys-Gly) (interchain with G-Cter in SUMO2) cross-link involves residue Lys-51. A compositionally biased stretch (low complexity) spans 59–69; it reads REVPAPALPVV. Ser-81 carries the phosphoserine modification. A compositionally biased stretch (basic and acidic residues) spans 84-96; the sequence is EREVRAKNGRVDS. The segment at 102–199 adopts a UBP-type; degenerate zinc-finger fold; the sequence is RHCPYLDTIN…YVLKPTFTKQ (98 aa). Zn(2+) is bound by residues Cys-135, Cys-138, His-154, and His-160. Positions 224-554 constitute a USP domain; that stretch reads VGLNNIKAND…EAYIQIWKRR (331 aa).

The protein belongs to the peptidase C19 family. As to quaternary structure, the U4/U6-U5 tri-snRNP complex is a building block of the precatalytic spliceosome (spliceosome B complex). Component of the U4/U6-U5 tri-snRNP complex composed of the U4, U6 and U5 snRNAs and at least PRPF3, PRPF4, PRPF6, PRPF8, PRPF31, SNRNP200, TXNL4A, SNRNP40, SNRPB, SNRPD1, SNRPD2, SNRPD3, SNRPE, SNRPF, SNRPG, DDX23, CD2BP2, PPIH, SNU13, EFTUD2, SART1 and USP39, plus LSM2, LSM3, LSM4, LSM5, LSM6, LSM7 and LSM8.

It localises to the nucleus. It catalyses the reaction Thiol-dependent hydrolysis of ester, thioester, amide, peptide and isopeptide bonds formed by the C-terminal Gly of ubiquitin (a 76-residue protein attached to proteins as an intracellular targeting signal).. In terms of biological role, deubiquitinating enzyme that plays a role in many cellular processes including cellular antiviral response, epithelial morphogenesis, DNA repair or B-cell development. Plays a role in pre-mRNA splicing as a component of the U4/U6-U5 tri-snRNP, one of the building blocks of the precatalytic spliceosome. Specifically regulates immunoglobulin gene rearrangement in a spliceosome-dependent manner, which involves modulating chromatin interactions at the Igh locus and therefore plays an essential role in B-cell development. Regulates AURKB mRNA levels, and thereby plays a role in cytokinesis and in the spindle checkpoint. Regulates apoptosis and G2/M cell cycle checkpoint in response to DNA damage by deubiquitinating and stabilizing CHK2. Also plays an important role in DNA repair by controlling the recruitment of XRCC4/LIG4 to DNA double-strand breaks for non-homologous end-joining repair. Participates in antiviral activity by affecting the type I IFN signaling by stabilizing STAT1 and decreasing its 'Lys-6'-linked ubiquitination. Contributes to non-canonical Wnt signaling during epidermal differentiation. Acts as a negative regulator NF-kappa-B activation through deubiquitination of 'Lys-48'-linked ubiquitination of NFKBIA. This Mus musculus (Mouse) protein is Ubiquitin carboxyl-terminal hydrolase 39.